A 496-amino-acid polypeptide reads, in one-letter code: Rhamnulokinase (496 aa).

ATP is bound at residue 13–17 (ASSGR). Substrate-binding positions include Gly-83 and 236 to 238 (HDT). The Proton acceptor role is filled by Asp-237. Thr-259 contacts ATP. Asn-296 contacts substrate. Gln-304 is a binding site for ATP. An intrachain disulfide couples Cys-353 to Cys-370. Position 402 (Gly-402) interacts with ATP. Cys-413 and Cys-417 are oxidised to a cystine.

It belongs to the rhamnulokinase family. The cofactor is Mg(2+).

It carries out the reaction L-rhamnulose + ATP = L-rhamnulose 1-phosphate + ADP + H(+). Its pathway is carbohydrate degradation; L-rhamnose degradation; glycerone phosphate from L-rhamnose: step 2/3. In terms of biological role, involved in the catabolism of L-rhamnose (6-deoxy-L-mannose). Catalyzes the transfer of the gamma-phosphate group from ATP to the 1-hydroxyl group of L-rhamnulose to yield L-rhamnulose 1-phosphate. This Pectobacterium atrosepticum (strain SCRI 1043 / ATCC BAA-672) (Erwinia carotovora subsp. atroseptica) protein is Rhamnulokinase.